The following is a 460-amino-acid chain: Muscarinic acetylcholine receptor M1 (460 aa).

The Extracellular segment spans residues 1-22 (MNTSAPPAVSPNITVLAPGKGP). Asn-2 and Asn-12 each carry an N-linked (GlcNAc...) asparagine glycan. A helical transmembrane segment spans residues 23–48 (WQVAFIGITTGLLSLATVTGNLLVLI). Topologically, residues 49–62 (SFKVNTELKTVNNY) are cytoplasmic. A helical membrane pass occupies residues 63–84 (FLLSLACADLIIGTFSMNLYTT). Over 85–95 (YLLMGHWALGT) the chain is Extracellular. The helical transmembrane segment at 96–121 (LACDLWLALDYVASNASVMNLLLISF) threads the bilayer. A disulfide bridge links Cys-98 with Cys-178. Residues 122–142 (DRYFSVTRPLSYRAKRTPRRA) lie on the Cytoplasmic side of the membrane. The chain crosses the membrane as a helical span at residues 143–164 (ALMIGLAWLVSFVLWAPAILFW). Residues 165-185 (QYLVGERTVLAGQCYIQFLSQ) lie on the Extracellular side of the membrane. A helical membrane pass occupies residues 186-209 (PIITFGTAMAAFYLPVTVMCTLYW). Over 210-366 (RIYRETENRA…LVKEKKAART (157 aa)) the chain is Cytoplasmic. Disordered stretches follow at residues 225–259 (LQGS…PGRC), 273–297 (SWKE…EEPG), and 310–351 (EAQA…QLAK). Thr-230 is modified (phosphothreonine). Residues 238-247 (SSSSERSQPG) show a composition bias toward low complexity. Residues 328-343 (RPTKKGRDRAGKGQKP) show a composition bias toward basic residues. The chain crosses the membrane as a helical span at residues 367–390 (LSAILLAFILTWTPYNIMVLVSTF). Residues 391-401 (CKDCVPETLWE) are Extracellular-facing. The chain crosses the membrane as a helical span at residues 402 to 420 (LGYWLCYVNSTINPMCYAL). The Cytoplasmic segment spans residues 421–460 (CNKAFRDTFRLLLLCRWDKRRWRKIPKRPGSVHRTPSRQC). Phosphothreonine is present on Thr-428. Ser-451 is modified (phosphoserine). Thr-455 bears the Phosphothreonine mark. The residue at position 457 (Ser-457) is a Phosphoserine.

Belongs to the G-protein coupled receptor 1 family. Muscarinic acetylcholine receptor subfamily. CHRM1 sub-subfamily. As to quaternary structure, interacts with GPRASP2. Interacts with TMEM147.

Its subcellular location is the cell membrane. The protein resides in the postsynaptic cell membrane. Its function is as follows. The muscarinic acetylcholine receptor mediates various cellular responses, including inhibition of adenylate cyclase, breakdown of phosphoinositides and modulation of potassium channels through the action of G proteins. Primary transducing effect is Pi turnover. The protein is Muscarinic acetylcholine receptor M1 (CHRM1) of Macaca mulatta (Rhesus macaque).